A 426-amino-acid chain; its full sequence is Glucose-6-phosphate isomerase (426 aa).

E276 functions as the Proton donor in the catalytic mechanism. Active-site residues include H297 and K413.

This sequence belongs to the GPI family.

Its subcellular location is the cytoplasm. It carries out the reaction alpha-D-glucose 6-phosphate = beta-D-fructose 6-phosphate. The protein operates within carbohydrate biosynthesis; gluconeogenesis. Its pathway is carbohydrate degradation; glycolysis; D-glyceraldehyde 3-phosphate and glycerone phosphate from D-glucose: step 2/4. Catalyzes the reversible isomerization of glucose-6-phosphate to fructose-6-phosphate. The chain is Glucose-6-phosphate isomerase from Mesoplasma florum (strain ATCC 33453 / NBRC 100688 / NCTC 11704 / L1) (Acholeplasma florum).